A 1876-amino-acid chain; its full sequence is Phenolphthiocerol/phthiocerol polyketide synthase subunit A (1876 aa).

In terms of domain architecture, Carrier 1 spans 9-83 (ADLRHWLIDY…ALAAYLAAPE (75 aa)). Residue S43 is modified to O-(pantetheine 4'-phosphoryl)serine. The 426-residue stretch at 101–526 (DEPIAVVGMG…GTNAHVVIEQ (426 aa)) folds into the Ketosynthase family 3 (KS3) domain. Catalysis depends on for beta-ketoacyl synthase activity residues C273, H408, and H448. The segment at 624-950 (EGSPGPGTVF…NLNKAHTIHP (327 aa)) is acyltransferase. S720 acts as the For malonyltransferase activity in catalysis. Positions 997–1112 (HTTVATVSAS…AQLSSSPSDS (116 aa)) are N-terminal hotdog fold. A PKS/mFAS DH domain is found at 997-1267 (HTTVATVSAS…YRALDFGLDV (271 aa)). The Proton acceptor; for dehydratase activity role is filled by H1027. The disordered stretch occupies residues 1104 to 1130 (QLSSSPSDSASSLNEHHRANGQPPERA). The span at 1106-1115 (SSSPSDSASS) shows a compositional bias: low complexity. Positions 1130 to 1267 (AHRDLIPDLA…YRALDFGLDV (138 aa)) are C-terminal hotdog fold. D1186 acts as the Proton donor; for dehydratase activity in catalysis. The beta-ketoacyl reductase stretch occupies residues 1491–1728 (AAYLITGGLG…DGYDVAQAVV (238 aa)). Residue 1492–1551 (AYLITGGLGALGLLMADWLADRGAHRLVLTGRTPLPPRRDWQLDTLDTELRRRIDAIRAL) coordinates NADP(+). Positions 1759-1836 (EVRSELEQGL…SLASYLAKRV (78 aa)) constitute a Carrier 2 domain. Residue S1796 is modified to O-(pantetheine 4'-phosphoryl)serine.

Requires NADP(+) as cofactor. Pantetheine 4'-phosphate serves as cofactor.

It catalyses the reaction icosanoyl-[(phenol)carboxyphthiodiolenone synthase] + 2 (S)-methylmalonyl-CoA + 3 malonyl-CoA + 5 NADPH + 10 H(+) = C32-carboxyphthiodiolenone-[(phenol)carboxyphthiodiolenone synthase] + 5 CO2 + 5 NADP(+) + 5 CoA + 2 H2O. The catalysed reaction is docosanoyl-[(phenol)carboxyphthiodiolenone synthase] + 2 (S)-methylmalonyl-CoA + 3 malonyl-CoA + 5 NADPH + 10 H(+) = C34-carboxyphthiodiolenone-[(phenol)carboxyphthiodiolenone synthase] + 5 CO2 + 5 NADP(+) + 5 CoA + 2 H2O. It carries out the reaction 17-(4-hydroxyphenyl)heptadecanoyl-[(phenol)carboxyphthiodiolenone synthase] + 2 (S)-methylmalonyl-CoA + 3 malonyl-CoA + 5 NADPH + 10 H(+) = C35-(phenol)carboxyphthiodiolenone-[(phenol)carboxyphthiodiolenone synthase] + 5 CO2 + 5 NADP(+) + 5 CoA + 2 H2O. The enzyme catalyses 19-(4-hydroxyphenyl)nonadecanoyl-[(phenol)carboxyphthiodiolenone synthase] + 2 (S)-methylmalonyl-CoA + 3 malonyl-CoA + 5 NADPH + 10 H(+) = C37-(phenol)carboxyphthiodiolenone-[(phenol)carboxyphthiodiolenone synthase] + 5 CO2 + 5 NADP(+) + 5 CoA + 2 H2O. The protein operates within lipid metabolism; fatty acid biosynthesis. Part of the PpsABCDE complex involved in the biosynthesis of the lipid core common to phthiocerols and phenolphthiocerols by successive additions of malonyl-CoA or methylmalonyl-CoA extender units. PpsA can accept as substrate the activated forms of either icosanoyl (C20), docosanoyl (C22) or lignoceroyl (C24) groups from FadD26, or a (4-hydroxyphenyl)-C17 or (4-hydroxyphenyl)-C19 fatty acyl from FadD29. PpsA initiates the biosynthesis and extends its substrate using a malonyl-CoA extender unit. The PpsB and PpsC proteins add the second and third malonyl-CoA extender units. PpsD adds an (R)-methylmalonyl unit and PpsE adds a second (R)-methylmalonyl unit. The incorporation of the methylmalonyl units results in formation of two branched methyl groups in the elongated product. This Mycobacterium bovis (strain ATCC BAA-935 / AF2122/97) protein is Phenolphthiocerol/phthiocerol polyketide synthase subunit A (ppsA).